Reading from the N-terminus, the 833-residue chain is Translation initiation factor IF-2 (833 aa).

Residues 1–247 (MTEDVKKADG…ALQQAFTKPA (247 aa)) are disordered. 2 stretches are compositionally biased toward basic and acidic residues: residues 53–99 (QKAE…EAKK) and 110–152 (VDVE…RYAE). Residues 153–166 (LSEEDAENENSEDY) are compositionally biased toward acidic residues. Positions 187-203 (KENRNRGGKNKVAKAKK) are enriched in basic residues. Over residues 204–227 (GGREDESSKTERESNRRNQKDGKM) the composition is skewed to basic and acidic residues. Residues 333–502 (TRAPVVTIMG…LLQSEVLELT (170 aa)) form the tr-type G domain. Positions 342 to 349 (GHVDHGKT) are G1. 342-349 (GHVDHGKT) contributes to the GTP binding site. The interval 367–371 (GITQH) is G2. The segment at 388–391 (DTPG) is G3. GTP-binding positions include 388–392 (DTPGH) and 442–445 (NKID). Residues 442-445 (NKID) are G4. Positions 478–480 (SAK) are G5.

Belongs to the TRAFAC class translation factor GTPase superfamily. Classic translation factor GTPase family. IF-2 subfamily.

It localises to the cytoplasm. Functionally, one of the essential components for the initiation of protein synthesis. Protects formylmethionyl-tRNA from spontaneous hydrolysis and promotes its binding to the 30S ribosomal subunits. Also involved in the hydrolysis of GTP during the formation of the 70S ribosomal complex. This Pasteurella multocida (strain Pm70) protein is Translation initiation factor IF-2 (infB).